The sequence spans 360 residues: Neutral protease 2 homolog SS1G_13741 (360 aa).

A glycan (N-linked (GlcNAc...) asparagine) is linked at N129. 2 disulfides stabilise this stretch: C189–C261 and C268–C286. H311 provides a ligand contact to Zn(2+). E312 is a catalytic residue. Residues H315 and D326 each coordinate Zn(2+).

It belongs to the peptidase M35 family. Zn(2+) serves as cofactor.

It is found in the secreted. The catalysed reaction is Preferential cleavage of bonds with hydrophobic residues in P1'. Also 3-Asn-|-Gln-4 and 8-Gly-|-Ser-9 bonds in insulin B chain.. Secreted metalloproteinase that allows assimilation of proteinaceous substrates. Shows high activities on basic nuclear substrates such as histone and protamine. The chain is Neutral protease 2 homolog SS1G_13741 from Sclerotinia sclerotiorum (strain ATCC 18683 / 1980 / Ss-1) (White mold).